A 599-amino-acid polypeptide reads, in one-letter code: MRTVFIYACIISLVLRTIPAHNDLMSKEKENKEKDVHKIIEDLRFLEKVDAILENSNMTIDDVKADADAYNPDEDAPKEELNKIEMEKKKAEEEAKNSKKKILERYLLDEKKKKSLRLIVSENHATSPSFFEESLIQEDFMSFIQSKGEIVNLKNLKSMIIELNSDMTDKELEAYITLLKKKGAHVESDELVGADSIYVDIIKDAVKRGDTSINFKKMQSNMLEVENKTYEKLNNNLKKSKNSYKKSFFNDEYRNLQWGLDLARLDDAQEMITTNSVETTKICVIDSGIDYNHPDLKGNIYVNLNELNGKEGIDDDNNGIIDDIYGVNYVNNTGDPWDDHNHGSHVSGIISAIGNNSIGVVGVNPSSKLVICKALDDKKLGRLGNIFKCIDYCINKKVNIINGSFSFDEYSTIFSSTIEYLARLGILFVVSSSNCSHPPSSIPDITRCDLSVNSKYPSVLSTQYDNMVVVANLKKKINGEYDISINSFYSDIYCQVSAPGANIYSTASRGSYMELSGTSMAAPHVAGIASIILSINPDLTYKQVVNILKNSVVKLSSHKNKIAWGGYIDILNAVKNAISSKNSYIRFQGIRMWKSKKRN.

The signal sequence occupies residues 1 to 20 (MRTVFIYACIISLVLRTIPA). Positions 21 to 195 (HNDLMSKEKE…VESDELVGAD (175 aa)) are cleaved as a propeptide — inhibition peptide. N57 is a glycosylation site (N-linked (GlcNAc...) asparagine). Residues 74–101 (EDAPKEELNKIEMEKKKAEEEAKNSKKK) adopt a coiled-coil conformation. Ca(2+)-binding residues include N123, T126, P128, and G183. An N-linked (GlcNAc...) asparagine glycan is attached at N227. D251 provides a ligand contact to Ca(2+). The Peptidase S8 domain occupies 257–574 (QWGLDLARLD…GGYIDILNAV (318 aa)). 2 disulfides stabilise this stretch: C283–C393 and C372–C389. The Charge relay system role is filled by D286. The Ca(2+) site is built by D295, E306, D314, D315, D316, N318, I320, D322, and D323. The N-linked (GlcNAc...) asparagine glycan is linked to N331. Residue H342 is the Charge relay system of the active site. I353 serves as a coordination point for Ca(2+). N355 carries N-linked (GlcNAc...) asparagine glycosylation. 3 residues coordinate Ca(2+): N356, I358, and V360. Residues N402 and N434 are each glycosylated (N-linked (GlcNAc...) asparagine). An intrachain disulfide couples C435 to C448. The active-site Charge relay system is S519.

The protein belongs to the peptidase S8 family. The N-terminal prodomain is cleaved.

The protein resides in the secreted. Its subcellular location is the parasitophorous vacuole lumen. It is found in the cytoplasmic vesicle. The protein localises to the secretory vesicle. The enzyme catalyses Hydrolysis of proteins with broad specificity for peptide bonds, and a preference for a large uncharged residue in P1. Hydrolyzes peptide amides.. Functionally, mediates the proteolytic maturation of serine protease SERA3. Mediates the proteolytic maturation of MSP1, and thereby may prime the parasite cell surface for invasion of fresh erythrocytes. Required for completion of the parasite pre-erythrocytic stages. Required for hepatic schizont development and merozoite formation. Required for the egress of the hepatic merozoites from the parasitophorous vacuole. Required for parasite infectivity during blood stages. Required for male gamete egress. This chain is Subtilisin-like protease 1, found in Plasmodium berghei (strain Anka).